A 500-amino-acid polypeptide reads, in one-letter code: Glutamate decarboxylase 3 (500 aa).

At Ser-8 the chain carries Phosphoserine. Lys-277 is subject to N6-(pyridoxal phosphate)lysine.

Belongs to the group II decarboxylase family. As to quaternary structure, homohexamer. Interacts with calmodulin. It depends on pyridoxal 5'-phosphate as a cofactor. In terms of tissue distribution, expressed at low levels in siliques.

The catalysed reaction is L-glutamate + H(+) = 4-aminobutanoate + CO2. Catalyzes the production of GABA. The calmodulin-binding is calcium-dependent and it is proposed that this may, directly or indirectly, form a calcium regulated control of GABA biosynthesis. The protein is Glutamate decarboxylase 3 (GAD3) of Arabidopsis thaliana (Mouse-ear cress).